The chain runs to 92 residues: Small ribosomal subunit protein uS19c (92 aa).

It belongs to the universal ribosomal protein uS19 family.

Its subcellular location is the plastid. It localises to the chloroplast. Functionally, protein S19 forms a complex with S13 that binds strongly to the 16S ribosomal RNA. This Spirogyra maxima (Green alga) protein is Small ribosomal subunit protein uS19c.